A 105-amino-acid chain; its full sequence is Heat shock protein HspQ (105 aa).

The interval 84–105 (QPKLDELSASIKKQLKTPRLRN) is disordered. Basic residues predominate over residues 96–105 (KQLKTPRLRN).

This sequence belongs to the HspQ family.

Its subcellular location is the cytoplasm. Its function is as follows. Involved in the degradation of certain denaturated proteins, including DnaA, during heat shock stress. The sequence is that of Heat shock protein HspQ from Wigglesworthia glossinidia brevipalpis.